A 173-amino-acid chain; its full sequence is Thiol-disulfide oxidoreductase ResA (173 aa).

The chain crosses the membrane as a helical; Signal-anchor for type II membrane protein span at residues 10–29 (VIILLILCGAVGFTLYQGYF). A Thioredoxin domain is found at 35-173 (MEIGKEAPNF…LEEYLKKITP (139 aa)). A disulfide bridge connects residues Cys-73 and Cys-76.

This sequence belongs to the thioredoxin family. ResA subfamily.

The protein resides in the cell membrane. Its pathway is protein modification; cytochrome c assembly. Its function is as follows. Thiol-disulfide oxidoreductase which is required in disulfide reduction during c-type cytochrome synthesis. May accept reducing equivalents from CcdA, leading to breakage of disulfide bonds in apocytochrome c; following this reduction heme can be covalently attached. This chain is Thiol-disulfide oxidoreductase ResA, found in Bacillus thuringiensis subsp. konkukian (strain 97-27).